Here is a 262-residue protein sequence, read N- to C-terminus: Ribosomal RNA small subunit methyltransferase A (262 aa).

Positions 16, 18, 43, 64, 89, and 109 each coordinate S-adenosyl-L-methionine.

This sequence belongs to the class I-like SAM-binding methyltransferase superfamily. rRNA adenine N(6)-methyltransferase family. RsmA subfamily.

The protein localises to the cytoplasm. It carries out the reaction adenosine(1518)/adenosine(1519) in 16S rRNA + 4 S-adenosyl-L-methionine = N(6)-dimethyladenosine(1518)/N(6)-dimethyladenosine(1519) in 16S rRNA + 4 S-adenosyl-L-homocysteine + 4 H(+). Functionally, specifically dimethylates two adjacent adenosines (A1518 and A1519) in the loop of a conserved hairpin near the 3'-end of 16S rRNA in the 30S particle. May play a critical role in biogenesis of 30S subunits. This chain is Ribosomal RNA small subunit methyltransferase A, found in Xanthomonas campestris pv. campestris (strain 8004).